Consider the following 437-residue polypeptide: Endoplasmic reticulum protein SC65 (437 aa).

Positions 1-18 are cleaved as a signal peptide; it reads MARVAWGLLWLLLGSAGA. Asn361 carries an N-linked (GlcNAc...) asparagine glycan. Acidic residues-rich tracts occupy residues 381-413 and 428-437; these read DEME…EEGM and AEAEPEPELA. The tract at residues 381 to 437 is disordered; that stretch reads DEMELEETEPPLEPEDALSDAEFEGEGDYEEGMYADWWQEPDAKGDEAEAEPEPELA.

The protein belongs to the leprecan family. Interacts with PLOD1, P3H3 and PPIB. Identified in a complex with PLOD1 and P3H3. In terms of tissue distribution, detected in fibroblasts (at protein level). Detected in spleen, prostate, testis, ovary, colon, pancreas, kidney, placenta and heart.

The protein resides in the endoplasmic reticulum. In terms of biological role, part of a complex composed of PLOD1, P3H3 and P3H4 that catalyzes hydroxylation of lysine residues in collagen alpha chains and is required for normal assembly and cross-linking of collagen fibrils. Required for normal bone density and normal skin stability via its role in hydroxylation of lysine residues in collagen alpha chains and in collagen fibril assembly. The chain is Endoplasmic reticulum protein SC65 from Homo sapiens (Human).